A 537-amino-acid chain; its full sequence is O-phosphoserine--tRNA(Cys) ligase (537 aa).

Substrate is bound by residues 186–188 (HMT), 231–233 (SAS), 273–274 (YY), and Asn-317.

Belongs to the class-II aminoacyl-tRNA synthetase family. O-phosphoseryl-tRNA(Cys) synthetase subfamily. In terms of assembly, homotetramer. Interacts with SepCysS.

It catalyses the reaction tRNA(Cys) + O-phospho-L-serine + ATP = O-phospho-L-seryl-tRNA(Cys) + AMP + diphosphate. In terms of biological role, catalyzes the attachment of O-phosphoserine (Sep) to tRNA(Cys). This chain is O-phosphoserine--tRNA(Cys) ligase, found in Methanococcus maripaludis (strain DSM 14266 / JCM 13030 / NBRC 101832 / S2 / LL).